The sequence spans 655 residues: HDA1 complex subunit 3 (655 aa).

A coiled-coil region spans residues 482 to 632; sequence HELEVENNLK…KTMDNLENLT (151 aa). A disordered region spans residues 635–655; it reads RVRTQNGNTKKKSRAKKPGNV. Residues 643-655 show a composition bias toward basic residues; the sequence is TKKKSRAKKPGNV.

This sequence belongs to the HDA2/3 family. HDA3 subfamily. As to quaternary structure, heterodimer with HDA2. Component of the HDA1 histone deacetylase complex composed of at least one HDA1 homodimer and one HDA2/HDA3 heterodimer. Interacts with HDA1 and HDA3.

The protein localises to the nucleus. Its function is as follows. Required for activity of HDA1 histone deacetylase complex. The HDA1 histone deacetylase complex is responsible for the deacetylation of lysine residues on the N-terminal part of the core histones (H2A, H2B, H3 and H4). Histone deacetylation gives a tag for epigenetic repression and plays an important role in transcriptional regulation, cell cycle progression and developmental events. The chain is HDA1 complex subunit 3 (HDA3) from Saccharomyces cerevisiae (strain ATCC 204508 / S288c) (Baker's yeast).